A 357-amino-acid polypeptide reads, in one-letter code: Ribosomal RNA small subunit methyltransferase C (357 aa).

It belongs to the methyltransferase superfamily. RsmC family. Monomer.

It is found in the cytoplasm. The catalysed reaction is guanosine(1207) in 16S rRNA + S-adenosyl-L-methionine = N(2)-methylguanosine(1207) in 16S rRNA + S-adenosyl-L-homocysteine + H(+). In terms of biological role, specifically methylates the guanine in position 1207 of 16S rRNA in the 30S particle. This chain is Ribosomal RNA small subunit methyltransferase C, found in Colwellia psychrerythraea (strain 34H / ATCC BAA-681) (Vibrio psychroerythus).